Consider the following 593-residue polypeptide: ESX-1 secretion system protein EccCb1 (593 aa).

2 FtsK domains span residues Arg66–Gln260 and Gln350–Asp546. Residues Gly85 to Ser92 and Gly377 to Thr384 contribute to the ATP site.

As to quaternary structure, part of the ESX-1 / type VII secretion system (T7SS), which is composed of cytosolic and membrane components. The ESX-1 membrane complex is composed of EccB1, EccCa1, EccCb1, EccD1 and EccE1.

The protein localises to the cytoplasm. Functionally, part of the ESX-1 / type VII specialized secretion system (T7SS), which exports several proteins including EsxA and EsxB. Plays a role in DNA conjugation, in both donor and recipient strains. This chain is ESX-1 secretion system protein EccCb1 (eccCb1), found in Mycolicibacterium smegmatis (strain MKD8) (Mycobacterium smegmatis).